We begin with the raw amino-acid sequence, 305 residues long: Dihydroorotate dehydrogenase B (NAD(+)), catalytic subunit (305 aa).

FMN-binding positions include S21 and 45–46 (KA). Residues K45 and 69–73 (NAIGL) each bind substrate. Residues N99 and N127 each coordinate FMN. Residue N127 participates in substrate binding. The Nucleophile role is filled by C130. FMN is bound by residues K165 and I191. 192-193 (NT) is a binding site for substrate. FMN-binding positions include G217, 243–244 (GG), and 265–266 (GT).

Belongs to the dihydroorotate dehydrogenase family. Type 1 subfamily. In terms of assembly, heterotetramer of 2 PyrK and 2 PyrD type B subunits. FMN is required as a cofactor.

It localises to the cytoplasm. The enzyme catalyses (S)-dihydroorotate + NAD(+) = orotate + NADH + H(+). The protein operates within pyrimidine metabolism; UMP biosynthesis via de novo pathway; orotate from (S)-dihydroorotate (NAD(+) route): step 1/1. Its function is as follows. Catalyzes the conversion of dihydroorotate to orotate with NAD(+) as electron acceptor. This is Dihydroorotate dehydrogenase B (NAD(+)), catalytic subunit (pyrD) from Halalkalibacterium halodurans (strain ATCC BAA-125 / DSM 18197 / FERM 7344 / JCM 9153 / C-125) (Bacillus halodurans).